We begin with the raw amino-acid sequence, 262 residues long: Snake venom serine proteinase 9 (262 aa).

A signal peptide spans 1-18; sequence MVLIRVLANLLILQLSYA. A propeptide spanning residues 19 to 24 is cleaved from the precursor; that stretch reads QKSSEL. Residues 25–253 form the Peptidase S1 domain; that stretch reads VIGGDECNID…HLDWIQSIIA (229 aa). 5 disulfides stabilise this stretch: Cys31-Cys165, Cys52-Cys68, Cys144-Cys214, Cys176-Cys193, and Cys204-Cys229. His67 functions as the Charge relay system in the catalytic mechanism. A glycan (N-linked (GlcNAc...) asparagine) is linked at Asn105. Asp112 acts as the Charge relay system in catalysis. Residue Ser208 is the Charge relay system of the active site.

Belongs to the peptidase S1 family. Snake venom subfamily. Monomer. Expressed by the venom gland.

Its subcellular location is the secreted. Snake venom serine protease that may act in the hemostasis system of the prey. The polypeptide is Snake venom serine proteinase 9 (Crotalus adamanteus (Eastern diamondback rattlesnake)).